A 249-amino-acid chain; its full sequence is Basic leucine zipper 23 (249 aa).

The disordered stretch occupies residues 66 to 90 (KVSTDDTSESSGKKRPLGNREAVRK). One can recognise a bZIP domain in the interval 74–121 (ESSGKKRPLGNREAVRKYREKKKAKAASLEDEVMRLKAVNNQLLKRLQ). The tract at residues 78 to 98 (KKRPLGNREAVRKYREKKKAK) is basic motif. Positions 102–116 (LEDEVMRLKAVNNQL) are leucine-zipper.

It localises to the nucleus. In terms of biological role, transcription factor involved in the response to zinc ion deficiency. Binds to the consensus sequence 5'-[AG]TGTCGACA[CT]-3' also called zinc deficiency response element (ZDRE). The ZDRE sequence is conserved in the plant kingdom and present in the promoters of genes that constitute the primary response to zinc deficiency, comprising additional ZIP metal transporter genes. Required for zinc accumulation in roots. Mediates the expression of the zinc transporter ZIP12 during growth in zinc-deficient conditions. ZIP12 transporter is involved in zinc uptake in roots. This Arabidopsis thaliana (Mouse-ear cress) protein is Basic leucine zipper 23.